A 271-amino-acid chain; its full sequence is Small ribosomal subunit protein uS2 (271 aa).

Residues 229-242 (KERKGKDAEEELKK) show a composition bias toward basic and acidic residues. Positions 229–271 (KERKGKDAEEELKKAAAPKAAPAAEAAPAAEAPAAPVVEAAAE) are disordered. Positions 243 to 271 (AAAPKAAPAAEAAPAAEAPAAPVVEAAAE) are enriched in low complexity.

The protein belongs to the universal ribosomal protein uS2 family.

In Nitratidesulfovibrio vulgaris (strain DSM 19637 / Miyazaki F) (Desulfovibrio vulgaris), this protein is Small ribosomal subunit protein uS2.